A 28-amino-acid polypeptide reads, in one-letter code: leu operon leader peptide (28 aa).

Functionally, involved in control of the biosynthesis of leucine. This is leu operon leader peptide (leuL) from Salmonella typhi.